The chain runs to 573 residues: uncharacterized protein (573 aa).

Disordered stretches follow at residues 1 to 33 (MLQQ…SIPR) and 60 to 101 (LVAN…SRYD). The segment covering 60–70 (LVANRSDNNGN) has biased composition (polar residues). The N-linked (GlcNAc...) asparagine glycan is linked to N63. Low complexity predominate over residues 84-95 (SSSTSSLPSTRN). A run of 10 repeats spans residues 102–103 (NM), 104–105 (NM), 106–107 (NM), 108–109 (NM), 110–111 (NM), 112–113 (NM), 114–115 (NM), 116–117 (NM), 118–119 (NM), and 120–121 (NM). The tract at residues 102–121 (NMNMNMNMNMNMNMNMNMNM) is 10 X 2 AA tandem repeats of N-M. N123 carries an N-linked (GlcNAc...) asparagine glycan. Disordered stretches follow at residues 150–174 (IPEK…PRVR), 192–271 (QFPN…IRSN), 286–317 (KSSN…PITS), and 357–379 (NNRI…DKRT). Over residues 157–170 (SRYSLRSSPPTYSN) the composition is skewed to polar residues. A compositionally biased stretch (low complexity) spans 208–225 (LPPSSTFPDSPSSSSLPL). Polar residues predominate over residues 226–252 (TQTGGPSSADNDSIATGTNNRSPQQTK). Residue N236 is glycosylated (N-linked (GlcNAc...) asparagine). N-linked (GlcNAc...) asparagine glycosylation is found at N437 and N442. 2 stretches are compositionally biased toward low complexity: residues 441–457 (INSS…SSSS) and 466–483 (SISS…SKSK). The tract at residues 441 to 483 (INSSISSPAPSSSSSSSLVSRGPMQSISSSPTPAPSSGSSKSK) is disordered. N498, N535, and N541 each carry an N-linked (GlcNAc...) asparagine glycan.

The protein to yeast AFR1. N-glycosylated.

This is an uncharacterized protein from Saccharomyces cerevisiae (strain ATCC 204508 / S288c) (Baker's yeast).